Consider the following 259-residue polypeptide: Ubiquitin-conjugating enzyme E2 J2 (259 aa).

Over 1–226 the chain is Cytoplasmic; the sequence is MSNNSNKRAP…AGLPQANRHH (226 aa). One can recognise a UBC core domain in the interval 12–162; sequence TATQRLKQDY…DKVFCELFPE (151 aa). C94 functions as the Glycyl thioester intermediate in the catalytic mechanism. Residues 227–247 form a helical; Anchor for type IV membrane protein membrane-spanning segment; that stretch reads GLLGGALANLFVIVGFAAFAY. Residues 248–259 are Lumenal-facing; that stretch reads TVKYVLRSIAQE.

It belongs to the ubiquitin-conjugating enzyme family. In terms of assembly, interacts with murid herpesvirus 4 protein K3 (mK3).

It localises to the endoplasmic reticulum membrane. It carries out the reaction S-ubiquitinyl-[E1 ubiquitin-activating enzyme]-L-cysteine + [E2 ubiquitin-conjugating enzyme]-L-cysteine = [E1 ubiquitin-activating enzyme]-L-cysteine + S-ubiquitinyl-[E2 ubiquitin-conjugating enzyme]-L-cysteine.. It functions in the pathway protein modification; protein ubiquitination. Its function is as follows. Catalyzes the covalent attachment of ubiquitin to other proteins. Seems to function in the selective degradation of misfolded membrane proteins from the endoplasmic reticulum (ERAD). In cooperation with the GATOR2 complex, catalyzes 'Lys-6'-linked ubiquitination of NPRL2. Functionally, in case of infection by the murid herpesvirus 4, its association with the viral E3 ligase K3 mediates ubiquitination of host surface class I (MHC-I) H-2D(b)/H2-D1 and H-2K(b)/H2-K1 molecules before they exit the endoplasmic reticulum, leading to their degradation by the ERAD system, thus blocking the immune detection of virus-infected cells. The complex formed with the murid herpesvirus 4 protein K3 mediates ubiquitination of lysine, as well as serine and threonine residues present in the cytoplasmic tail of surface class I molecules and promotes ubiquitination of hydroxylated serine or threonine residues via ester bonds instead of the classical isopeptide linkage. The sequence is that of Ubiquitin-conjugating enzyme E2 J2 (Ube2j2) from Mus musculus (Mouse).